A 255-amino-acid chain; its full sequence is Flap endonuclease Xni (255 aa).

D105 serves as a coordination point for Mg(2+). The region spanning 162–254 (EHKQFIDYLA…LKQFRLPKAN (93 aa)) is the 5'-3' exonuclease domain. The K(+) site is built by L172, A173, P181, V183, and I186. The interaction with DNA stretch occupies residues 185–190 (GIGPKS).

It belongs to the Xni family. The cofactor is Mg(2+). K(+) serves as cofactor.

Has flap endonuclease activity. During DNA replication, flap endonucleases cleave the 5'-overhanging flap structure that is generated by displacement synthesis when DNA polymerase encounters the 5'-end of a downstream Okazaki fragment. The protein is Flap endonuclease Xni of Shewanella piezotolerans (strain WP3 / JCM 13877).